The primary structure comprises 201 residues: MDKFTTLEGVAAPLKIINVDTDMIIPKQYLKTIKRTGLGKGLFSEQRYNDDGSENPDFILNKPAYRGAKILVAGDNFGCGSSREHAPWALLDFGIRCVISTSFGDIFYNNCFKNGVLPIRVEQADLDRLFDDAERGSNATVTIDLPNQEIRGPDGGTVKFEIDPFRKHCLINGLDDIGLTLEKKASIDSYEAKAKTERAWA.

Belongs to the LeuD family. LeuD type 1 subfamily. In terms of assembly, heterodimer of LeuC and LeuD.

It catalyses the reaction (2R,3S)-3-isopropylmalate = (2S)-2-isopropylmalate. It participates in amino-acid biosynthesis; L-leucine biosynthesis; L-leucine from 3-methyl-2-oxobutanoate: step 2/4. In terms of biological role, catalyzes the isomerization between 2-isopropylmalate and 3-isopropylmalate, via the formation of 2-isopropylmaleate. The protein is 3-isopropylmalate dehydratase small subunit of Rhodopseudomonas palustris (strain BisA53).